Here is a 208-residue protein sequence, read N- to C-terminus: Peptidyl-prolyl cis-trans isomerase FKBP13, chloroplastic (208 aa).

2 disulfides stabilise this stretch: Cys-84/Cys-96 and Cys-185/Cys-190. One can recognise a PPIase FKBP-type domain in the interval 109–208 (GQLIKAHYVG…LFDIEYIGKA (100 aa)).

Belongs to the FKBP-type PPIase family. In terms of assembly, interacts in vitro with LTO1. The precursor, but not the mature form of the protein, interacts with the Rieske protein. In terms of tissue distribution, expressed in stems, leaves and developing flower buds, but not in roots.

Its subcellular location is the plastid. It is found in the chloroplast thylakoid lumen. It catalyses the reaction [protein]-peptidylproline (omega=180) = [protein]-peptidylproline (omega=0). PPIase activity is optimal in oxidized form (S-S) and minimal in reduced form (SH). Reduction of the oxidized form is mediated by thioredoxin (TRX-M). Functionally, PPIases accelerate the folding of proteins. It catalyzes the cis-trans isomerization of proline imidic peptide bonds in oligopeptides. Responsive of the major PPIase activity in the chloroplast thylakoid lumen. Regulates the accumulation of Rieske protein, an essential component of the photosynthetic electron transport chain. The chain is Peptidyl-prolyl cis-trans isomerase FKBP13, chloroplastic from Arabidopsis thaliana (Mouse-ear cress).